A 291-amino-acid polypeptide reads, in one-letter code: ATP synthase gamma chain (291 aa).

The protein belongs to the ATPase gamma chain family. F-type ATPases have 2 components, CF(1) - the catalytic core - and CF(0) - the membrane proton channel. CF(1) has five subunits: alpha(3), beta(3), gamma(1), delta(1), epsilon(1). CF(0) has three main subunits: a, b and c.

It is found in the cell inner membrane. Produces ATP from ADP in the presence of a proton gradient across the membrane. The gamma chain is believed to be important in regulating ATPase activity and the flow of protons through the CF(0) complex. The chain is ATP synthase gamma chain from Burkholderia mallei (strain NCTC 10247).